We begin with the raw amino-acid sequence, 118 residues long: cAMP-responsive element-binding protein-like 2 (118 aa).

The interval 1–25 (MDDSKVSGGKVKKPGKRGRKPAKID) is disordered. A compositionally biased stretch (basic residues) spans 10-21 (KVKKPGKRGRKP). In terms of domain architecture, bZIP spans 23 to 86 (KIDLKAKLER…AAMDQGKIPS (64 aa)). The interval 29-60 (KLERSRQSARECRARKKLRYQYLEELVSSRER) is basic motif. Residues 62–69 (ICALREEL) form a leucine-zipper region.

The protein belongs to the bZIP family. ATF subfamily.

The protein resides in the nucleus. Probable regulator of creb1 transcriptional activity which is involved in adipose cells differentiation. May also play a regulatory role in the cell cycle. The sequence is that of cAMP-responsive element-binding protein-like 2 (crebl2) from Xenopus tropicalis (Western clawed frog).